Reading from the N-terminus, the 74-residue chain is MNSETLDVTGLKCPLPILRAKKALAQMQQGDVLTVLATDGGAPGDFEAFCRQTGHVLLDASEQDGVFTLVVQHK.

The active-site Cysteine persulfide intermediate is the Cys13.

It belongs to the sulfur carrier protein TusA family.

This Neisseria meningitidis serogroup A / serotype 4A (strain DSM 15465 / Z2491) protein is Putative sulfur carrier protein NMA0882.